The sequence spans 623 residues: Chaperone protein DnaK (623 aa).

Thr174 carries the post-translational modification Phosphothreonine; by autocatalysis. 2 disordered regions span residues 470-504 and 578-623; these read ITIK…KEEV and GGAQ…DPDK. Residues 481–504 show a composition bias toward basic and acidic residues; that stretch reads EEIKKMQKDAEEHAEEDKKRKEEV. The span at 578–604 shows a compositional bias: low complexity; it reads GGAQGAAGQAGPQGAQGGQPNNDNGSS. A compositionally biased stretch (basic and acidic residues) spans 614–623; sequence GDFHKVDPDK.

This sequence belongs to the heat shock protein 70 family.

In terms of biological role, acts as a chaperone. This Lactobacillus gasseri (strain ATCC 33323 / DSM 20243 / BCRC 14619 / CIP 102991 / JCM 1131 / KCTC 3163 / NCIMB 11718 / NCTC 13722 / AM63) protein is Chaperone protein DnaK.